The following is a 128-amino-acid chain: RutC family protein BU371 (128 aa).

The protein belongs to the RutC family.

The chain is RutC family protein BU371 from Buchnera aphidicola subsp. Acyrthosiphon pisum (strain APS) (Acyrthosiphon pisum symbiotic bacterium).